The primary structure comprises 224 residues: 2-C-methyl-D-erythritol 4-phosphate cytidylyltransferase (224 aa).

It belongs to the IspD/TarI cytidylyltransferase family. IspD subfamily.

The catalysed reaction is 2-C-methyl-D-erythritol 4-phosphate + CTP + H(+) = 4-CDP-2-C-methyl-D-erythritol + diphosphate. Its pathway is isoprenoid biosynthesis; isopentenyl diphosphate biosynthesis via DXP pathway; isopentenyl diphosphate from 1-deoxy-D-xylulose 5-phosphate: step 2/6. Its function is as follows. Catalyzes the formation of 4-diphosphocytidyl-2-C-methyl-D-erythritol from CTP and 2-C-methyl-D-erythritol 4-phosphate (MEP). This Caldicellulosiruptor saccharolyticus (strain ATCC 43494 / DSM 8903 / Tp8T 6331) protein is 2-C-methyl-D-erythritol 4-phosphate cytidylyltransferase.